A 181-amino-acid polypeptide reads, in one-letter code: Trafficking protein particle complex subunit 3-like protein (181 aa).

Residue cysteine 68 is the site of S-palmitoyl cysteine attachment.

Belongs to the TRAPP small subunits family. BET3 subfamily. As to quaternary structure, homodimer. Component of the multisubunit TRAPP (transport protein particle) complex, which includes at least TRAPPC2, TRAPPC2L, TRAPPC3, TRAPPC3L, TRAPPC4, TRAPPC5, TRAPPC8, TRAPPC9, TRAPPC10, TRAPPC11 and TRAPPC12.

Its subcellular location is the golgi apparatus. It is found in the cis-Golgi network. It localises to the endoplasmic reticulum. May play a role in vesicular transport from endoplasmic reticulum to Golgi. This Homo sapiens (Human) protein is Trafficking protein particle complex subunit 3-like protein (TRAPPC3L).